The following is a 141-amino-acid chain: Putative pre-16S rRNA nuclease (141 aa).

Belongs to the YqgF nuclease family.

It is found in the cytoplasm. Its function is as follows. Could be a nuclease involved in processing of the 5'-end of pre-16S rRNA. The polypeptide is Putative pre-16S rRNA nuclease (Sodalis glossinidius (strain morsitans)).